Here is a 347-residue protein sequence, read N- to C-terminus: Ribosomal RNA small subunit methyltransferase C (347 aa).

Belongs to the methyltransferase superfamily. RsmC family. As to quaternary structure, monomer.

Its subcellular location is the cytoplasm. It carries out the reaction guanosine(1207) in 16S rRNA + S-adenosyl-L-methionine = N(2)-methylguanosine(1207) in 16S rRNA + S-adenosyl-L-homocysteine + H(+). Functionally, specifically methylates the guanine in position 1207 of 16S rRNA in the 30S particle. The polypeptide is Ribosomal RNA small subunit methyltransferase C (Shewanella baltica (strain OS185)).